The primary structure comprises 379 residues: Putative thylakoid lumen peptidyl-prolyl cis-trans isomerase sll0408 (379 aa).

A signal peptide spans 1–33; that stretch reads MQIIKTPLGIITRRGLQLSLLSLLLTMLSLTWA. The region spanning 190-378 is the PPIase cyclophilin-type domain; it reads GRATVEMTTN…SGADNLVNGN (189 aa).

The protein resides in the cellular thylakoid lumen. The enzyme catalyses [protein]-peptidylproline (omega=180) = [protein]-peptidylproline (omega=0). PPIases accelerate the folding of proteins. It catalyzes the cis-trans isomerization of proline imidic peptide bonds in oligopeptides. Required for the assembly and stabilization of PSII. The chain is Putative thylakoid lumen peptidyl-prolyl cis-trans isomerase sll0408 from Synechocystis sp. (strain ATCC 27184 / PCC 6803 / Kazusa).